The chain runs to 242 residues: ATP synthase subunit a (242 aa).

6 consecutive transmembrane segments (helical) span residues 29–49 (SSIYMLLASTLALTYFYLAFY), 84–104 (FIPLVFSLFIFILFCNLLGMT), 114–134 (IIVTFTLALLIFLTVTIVGFI), 140–160 (FLTLFLPQGTPVWLAPLMIVI), 181–201 (MAGHVLLKVIAGFTVSLMIYL), and 203–223 (FLPIPLIVILIGFEIFVAILQ).

It belongs to the ATPase A chain family. F-type ATPases have 2 components, CF(1) - the catalytic core - and CF(0) - the membrane proton channel. CF(1) has five subunits: alpha(3), beta(3), gamma(1), delta(1), epsilon(1). CF(0) has three main subunits: a(1), b(2) and c(9-12). The alpha and beta chains form an alternating ring which encloses part of the gamma chain. CF(1) is attached to CF(0) by a central stalk formed by the gamma and epsilon chains, while a peripheral stalk is formed by the delta and b chains.

It localises to the cell inner membrane. Functionally, key component of the proton channel; it plays a direct role in the translocation of protons across the membrane. The chain is ATP synthase subunit a from Rickettsia typhi (strain ATCC VR-144 / Wilmington).